A 97-amino-acid polypeptide reads, in one-letter code: Large ribosomal subunit protein uL23 (97 aa).

The protein belongs to the universal ribosomal protein uL23 family. In terms of assembly, part of the 50S ribosomal subunit. Contacts protein L29, and trigger factor when it is bound to the ribosome.

In terms of biological role, one of the early assembly proteins it binds 23S rRNA. One of the proteins that surrounds the polypeptide exit tunnel on the outside of the ribosome. Forms the main docking site for trigger factor binding to the ribosome. This is Large ribosomal subunit protein uL23 from Allorhizobium ampelinum (strain ATCC BAA-846 / DSM 112012 / S4) (Agrobacterium vitis (strain S4)).